Here is a 307-residue protein sequence, read N- to C-terminus: Potassium channel subfamily K member 7 (307 aa).

Residues Met1–Tyr10 lie on the Cytoplasmic side of the membrane. The chain crosses the membrane as a helical span at residues Leu11 to Leu31. A glycan (N-linked (GlcNAc...) asparagine) is linked at Asn83. Residues Leu92–Gly118 constitute an intramembrane region (pore-forming). Residues Ala120–Leu140 form a helical membrane-spanning segment. Residues Arg141 to Ala172 are Cytoplasmic-facing. The chain crosses the membrane as a helical span at residues Gly173–Val193. The pore-forming intramembrane region spans Leu199 to His227. A helical transmembrane segment spans residues Leu233–Val253. The Cytoplasmic segment spans residues Glu254–Ala307.

This sequence belongs to the two pore domain potassium channel (TC 1.A.1.8) family. Homodimer. In terms of tissue distribution, detected in embryo, eye, lung and liver. Weakly expressed in colon, testis, atria, kidney, intestine, bladder, uterus, ovary, salivary gland, thymus and brain stem. Not detected in brain, cerebellum, spinal cord, heart, ventricle, skeletal muscle, liver, placenta and pancreas. In the eye, highly expressed in the retinal ganglion cell layer and inner nuclear layer.

The protein resides in the membrane. Probable potassium channel subunit. No channel activity observed in vitro as protein remains in the endoplasmic reticulum. May need to associate with an as yet unknown partner in order to reach the plasma membrane. The sequence is that of Potassium channel subfamily K member 7 (Kcnk7) from Mus musculus (Mouse).